A 268-amino-acid polypeptide reads, in one-letter code: Shikimate dehydrogenase (NADP(+)) (268 aa).

Shikimate contacts are provided by residues 13–15 and Thr-60; that span reads SLS. The Proton acceptor role is filled by Lys-64. Glu-76 contacts NADP(+). Shikimate is bound by residues Asn-85 and Asp-100. NADP(+)-binding positions include 124–128, 148–153, and Ile-209; these read GAGGA and NRTMAR. Tyr-211 provides a ligand contact to shikimate. Gly-232 is an NADP(+) binding site.

This sequence belongs to the shikimate dehydrogenase family. Homodimer.

It catalyses the reaction shikimate + NADP(+) = 3-dehydroshikimate + NADPH + H(+). It functions in the pathway metabolic intermediate biosynthesis; chorismate biosynthesis; chorismate from D-erythrose 4-phosphate and phosphoenolpyruvate: step 4/7. Involved in the biosynthesis of the chorismate, which leads to the biosynthesis of aromatic amino acids. Catalyzes the reversible NADPH linked reduction of 3-dehydroshikimate (DHSA) to yield shikimate (SA). The protein is Shikimate dehydrogenase (NADP(+)) of Staphylococcus aureus (strain USA300).